A 110-amino-acid chain; its full sequence is U1-lycotoxin-Ls1ii (110 aa).

The N-terminal stretch at 1-20 (MKFVLLFGVLLVTLFSYSSA) is a signal peptide. Positions 21-44 (EMLDDFDQADEDELLSLIEKEEAR) are excised as a propeptide. Disulfide bonds link Cys-47–Cys-62, Cys-54–Cys-71, Cys-61–Cys-89, and Cys-73–Cys-87.

It belongs to the neurotoxin 19 (CSTX) family. 03 subfamily. In terms of tissue distribution, expressed by the venom gland.

It is found in the secreted. This Lycosa singoriensis (Wolf spider) protein is U1-lycotoxin-Ls1ii.